A 479-amino-acid polypeptide reads, in one-letter code: Bifunctional protein HldE (479 aa).

The interval 1 to 322 (MIDDFRFGRI…RELLQEMPET (322 aa)) is ribokinase. An ATP-binding site is contributed by 198–201 (NRIE). Asp-267 is a catalytic residue. Residues 347-479 (FTNGCFDLVH…LVRGMQSAPS (133 aa)) form a cytidylyltransferase region.

It in the N-terminal section; belongs to the carbohydrate kinase PfkB family. This sequence in the C-terminal section; belongs to the cytidylyltransferase family. As to quaternary structure, homodimer.

It carries out the reaction D-glycero-beta-D-manno-heptose 7-phosphate + ATP = D-glycero-beta-D-manno-heptose 1,7-bisphosphate + ADP + H(+). It catalyses the reaction D-glycero-beta-D-manno-heptose 1-phosphate + ATP + H(+) = ADP-D-glycero-beta-D-manno-heptose + diphosphate. It participates in nucleotide-sugar biosynthesis; ADP-L-glycero-beta-D-manno-heptose biosynthesis; ADP-L-glycero-beta-D-manno-heptose from D-glycero-beta-D-manno-heptose 7-phosphate: step 1/4. The protein operates within nucleotide-sugar biosynthesis; ADP-L-glycero-beta-D-manno-heptose biosynthesis; ADP-L-glycero-beta-D-manno-heptose from D-glycero-beta-D-manno-heptose 7-phosphate: step 3/4. Its function is as follows. Catalyzes the phosphorylation of D-glycero-D-manno-heptose 7-phosphate at the C-1 position to selectively form D-glycero-beta-D-manno-heptose-1,7-bisphosphate. In terms of biological role, catalyzes the ADP transfer from ATP to D-glycero-beta-D-manno-heptose 1-phosphate, yielding ADP-D-glycero-beta-D-manno-heptose. This Gluconobacter oxydans (strain 621H) (Gluconobacter suboxydans) protein is Bifunctional protein HldE.